Reading from the N-terminus, the 1299-residue chain is Cilia- and flagella-associated protein 251 (1299 aa).

A disordered region spans residues 1-351; sequence MSDTEENPLE…SQKPEDILAQ (351 aa). 3 stretches are compositionally biased toward acidic residues: residues 17–45, 91–162, and 176–189; these read EMEE…EEEE, EKEE…EEDA, and ESQE…EWVE. Over residues 190 to 199 the composition is skewed to basic and acidic residues; sequence KEEQREGEEV. A compositionally biased stretch (acidic residues) spans 212 to 228; that stretch reads EEEGWEEEKSGEEEKSE. Positions 229-257 are enriched in basic and acidic residues; the sequence is ESERSKERGGEEEGQEKEEAEHEGEREEG. The segment covering 269-280 has biased composition (acidic residues); the sequence is REEEEEEEDTET. Basic and acidic residues-rich tracts occupy residues 281 to 297 and 331 to 351; these read TETK…EKQN and NSMK…ILAQ. WD repeat units lie at residues 484–526, 534–574, 585–624, 643–678, 681–741, 745–785, 791–828, 838–874, 881–924, 935–975, 981–1027, 1033–1071, 1109–1149, and 1169–1209; these read PVHT…IWKW, ACTL…CWFE, VLTE…VWDI, PRKL…FYDH, SVVN…VYHM, GTKL…VWDF, LFSR…ILDA, PFKY…MVVV, WEYL…EYNL, LDVH…LFNA, RKTL…ILPV, KTCA…QWKI, YFYY…FYPS, and GKLI…GYTN.

It localises to the cytoplasm. It is found in the cytoskeleton. Its subcellular location is the cilium axoneme. The protein localises to the cell projection. The protein resides in the cilium. It localises to the flagellum. Functionally, involved in spermatozoa motility. May also regulate cilium motility through its role in the assembly of the axonemal radial spokes. This chain is Cilia- and flagella-associated protein 251, found in Mus musculus (Mouse).